Consider the following 91-residue polypeptide: DNA-directed RNA polymerase subunit omega (91 aa).

The protein belongs to the RNA polymerase subunit omega family. The RNAP catalytic core consists of 2 alpha, 1 beta, 1 beta' and 1 omega subunit. When a sigma factor is associated with the core the holoenzyme is formed, which can initiate transcription.

The enzyme catalyses RNA(n) + a ribonucleoside 5'-triphosphate = RNA(n+1) + diphosphate. Its function is as follows. Promotes RNA polymerase assembly. Latches the N- and C-terminal regions of the beta' subunit thereby facilitating its interaction with the beta and alpha subunits. The polypeptide is DNA-directed RNA polymerase subunit omega (Pseudoalteromonas translucida (strain TAC 125)).